The following is a 207-amino-acid chain: Guanylate kinase (207 aa).

The Guanylate kinase-like domain occupies 5–183; sequence GTLYIISAPS…ALYELEAIVE (179 aa). Residue 12–19 coordinates ATP; the sequence is APSGAGKT.

This sequence belongs to the guanylate kinase family.

It is found in the cytoplasm. The catalysed reaction is GMP + ATP = GDP + ADP. Essential for recycling GMP and indirectly, cGMP. The chain is Guanylate kinase from Alcanivorax borkumensis (strain ATCC 700651 / DSM 11573 / NCIMB 13689 / SK2).